The following is a 204-amino-acid chain: Tat proofreading chaperone DmsD (204 aa).

The protein belongs to the TorD/DmsD family. DmsD subfamily. Monomer in solution.

In terms of biological role, required for biogenesis/assembly of DMSO reductase, but not for the interaction of the DmsA signal peptide with the Tat system. May be part of a chaperone cascade complex that facilitates a folding-maturation pathway for the substrate protein. The protein is Tat proofreading chaperone DmsD of Salmonella typhimurium (strain LT2 / SGSC1412 / ATCC 700720).